Here is a 903-residue protein sequence, read N- to C-terminus: MALKILERIFGDYSAKVVKRHQRTVALINSLEPEMQKLSDAELAHKTVEFKERIARGETLEQILPEAFAVVREASIRTTGRRPFDVQLIGGIVLHEGNIAEMKTGEGKTLVAAMPLYLNALLGRGCHLVTVNDYLAKVGRDDIGRIYRFLGMSCGLIVHGLTSAQRREAYNCDITYGTNNEFGFDYLRDNMAMHPQDMVHREFFYAIVDEADSILIDEARTPLIISGPSGKPAEMYYTFAKIAERLKRDEDYIVEEKEKRVAPTEEGIAKVEKWLNVDHLYEGENQQLVHYLNNAIKAKELFHRDRDYVVKDGQVIIVDEFTGRLMFGRRWSDGLHQAVEAKEGVKIEEETQTLATITFQNYFRMYKKLAGMTGTALTEEEEFRKIYGLDVIAIPTNKPMIRIDHPDVVYKTVKAKFKAVADDVEERHKRGQPVLVGTVSIEKSEYLSQILTRRGIPHQVLNAKHHEREAEIVAQAGRFGAVTIATNMAGRGTDILLGGNPDFAARQRMRAEGYAPELIVAATDIIPSQDPEVQAAREVYLQYLKEEEAKCAEEAEKVRAVGGLCVIGTERHEARRIDNQLRGRAGRQGDPGESRFYVSLEDDLMRLFGGEMVQNLMNKLGIEDDVPIDSPMVSRAIENAQKKVEARNFDIRKHVLQYDDVMNTQRELIYKQRRQILEGHDTREVVLDAIAATAQSIVEEGVPEDVYFEEWDPSILVALAEDNGIPKGAVNVEDLKAAVEGVRREQEGREKLAKVIEQAAIRAYEEKEARLGAETMRQLERFLLLRTVDEKWMDHLDAMDDLREGVGLRAYGQRDPLIEYKMEAMEMFNNMIRSIQRDMVRNLFIFEVVREPQRPRIMIESGSQGAAPRQPVRAEGKKVGRNDPCPCGSGKKYKFCCGRAANA.

ATP contacts are provided by residues Gln87, 105–109 (GEGKT), and Asp494. The tract at residues 861–883 (SGSQGAAPRQPVRAEGKKVGRND) is disordered. A compositionally biased stretch (basic and acidic residues) spans 872-881 (VRAEGKKVGR). The Zn(2+) site is built by Cys885, Cys887, Cys896, and Cys897.

Belongs to the SecA family. In terms of assembly, monomer and homodimer. Part of the essential Sec protein translocation apparatus which comprises SecA, SecYEG and auxiliary proteins SecDF. Other proteins may also be involved. Zn(2+) serves as cofactor.

The protein resides in the cell membrane. Its subcellular location is the cytoplasm. The catalysed reaction is ATP + H2O + cellular proteinSide 1 = ADP + phosphate + cellular proteinSide 2.. In terms of biological role, part of the Sec protein translocase complex. Interacts with the SecYEG preprotein conducting channel. Has a central role in coupling the hydrolysis of ATP to the transfer of proteins into and across the cell membrane, serving as an ATP-driven molecular motor driving the stepwise translocation of polypeptide chains across the membrane. This Symbiobacterium thermophilum (strain DSM 24528 / JCM 14929 / IAM 14863 / T) protein is Protein translocase subunit SecA.